The following is a 116-amino-acid chain: Large ribosomal subunit protein bL19 (116 aa).

It belongs to the bacterial ribosomal protein bL19 family.

Its function is as follows. This protein is located at the 30S-50S ribosomal subunit interface and may play a role in the structure and function of the aminoacyl-tRNA binding site. The protein is Large ribosomal subunit protein bL19 of Histophilus somni (strain 129Pt) (Haemophilus somnus).